The primary structure comprises 81 residues: Exodeoxyribonuclease 7 small subunit (81 aa).

Residues 61–81 form a disordered region; that stretch reads MNDSDQEVAFETPQGGTGDAD.

Belongs to the XseB family. As to quaternary structure, heterooligomer composed of large and small subunits.

The protein localises to the cytoplasm. It carries out the reaction Exonucleolytic cleavage in either 5'- to 3'- or 3'- to 5'-direction to yield nucleoside 5'-phosphates.. Functionally, bidirectionally degrades single-stranded DNA into large acid-insoluble oligonucleotides, which are then degraded further into small acid-soluble oligonucleotides. The protein is Exodeoxyribonuclease 7 small subunit of Levilactobacillus brevis (strain ATCC 367 / BCRC 12310 / CIP 105137 / JCM 1170 / LMG 11437 / NCIMB 947 / NCTC 947) (Lactobacillus brevis).